The primary structure comprises 275 residues: MTLQQEIIQALGAKPHINPEEEIRRSVDFLKAYLKTYPFLKSLVLGISGGQDSTLAGKLSQMAITELREETGDNALQFIAVRLPYGVQADEQDCQDAIAFIQPDRVLTVNIKGAVLASEQALREAGIELSDFVRGNEKARERMKAQYSIAGMTHGVVVGTDHAAEAITGFFTKYGDGGTDINPLHRLNKRQGKQLLAALGCPEHLYKKVPTADLEDDRPSLPDEAALGVTYDNIDDYLEGKTLDSAIAKTIEGWYVKTEHKRRLPITVFDDFWKK.

Residue 46–53 participates in ATP binding; that stretch reads GISGGQDS. Residue Asp-52 participates in Mg(2+) binding. Arg-140 contributes to the deamido-NAD(+) binding site. ATP is bound at residue Thr-160. Glu-165 serves as a coordination point for Mg(2+). Deamido-NAD(+) contacts are provided by Lys-173 and Asp-180. Residues Lys-189 and Thr-211 each coordinate ATP. 260–261 serves as a coordination point for deamido-NAD(+); that stretch reads HK.

Belongs to the NAD synthetase family. Homodimer.

It catalyses the reaction deamido-NAD(+) + NH4(+) + ATP = AMP + diphosphate + NAD(+) + H(+). It functions in the pathway cofactor biosynthesis; NAD(+) biosynthesis; NAD(+) from deamido-NAD(+) (ammonia route): step 1/1. Functionally, catalyzes the ATP-dependent amidation of deamido-NAD to form NAD. Uses ammonia as a nitrogen source. The chain is NH(3)-dependent NAD(+) synthetase from Salmonella typhi.